We begin with the raw amino-acid sequence, 239 residues long: tRNA (guanine-N(7)-)-methyltransferase (239 aa).

Glu69, Glu94, Asp121, and Asp144 together coordinate S-adenosyl-L-methionine. Residue Asp144 is part of the active site. Lys148 is a binding site for substrate. The segment at 150–155 (RHNKRR) is interaction with RNA. Residues Asp180 and 217–220 (TKFE) each bind substrate.

Belongs to the class I-like SAM-binding methyltransferase superfamily. TrmB family. Monomer.

It catalyses the reaction guanosine(46) in tRNA + S-adenosyl-L-methionine = N(7)-methylguanosine(46) in tRNA + S-adenosyl-L-homocysteine. Its pathway is tRNA modification; N(7)-methylguanine-tRNA biosynthesis. Functionally, catalyzes the formation of N(7)-methylguanine at position 46 (m7G46) in tRNA. The chain is tRNA (guanine-N(7)-)-methyltransferase from Photorhabdus laumondii subsp. laumondii (strain DSM 15139 / CIP 105565 / TT01) (Photorhabdus luminescens subsp. laumondii).